Reading from the N-terminus, the 810-residue chain is Fibroblast growth factor receptor 1-A (810 aa).

The signal sequence occupies residues 1 to 26 (MKMMMIMKTTLLLISVLLTQALQSQG). The Extracellular segment spans residues 27–363 (RPAIQDEAPA…TQLPNQTYLE (337 aa)). Ig-like C2-type domains lie at 28 to 115 (PAIQ…FNIS), 147 to 235 (PDKM…YQLD), and 244 to 346 (PILQ…AWLT). Cysteine 53 and cysteine 99 form a disulfide bridge. N-linked (GlcNAc...) asparagine glycosylation is found at asparagine 107, asparagine 113, asparagine 216, asparagine 229, asparagine 253, asparagine 285, asparagine 306, asparagine 319, and asparagine 358. An intrachain disulfide couples cysteine 167 to cysteine 219. Cysteine 266 and cysteine 330 are disulfide-bonded. A helical transmembrane segment spans residues 364-384 (VLIYCVGFFLICVMVGTAVLA). The Cytoplasmic segment spans residues 385-810 (KMHSSAKKSD…PNRGVAFKKR (426 aa)). Position 450 is a phosphotyrosine; by autocatalysis (tyrosine 450). Positions 465 to 754 (LVLGKPLGEG…LSMTSNQEYL (290 aa)) constitute a Protein kinase domain. Residues 471 to 477 (LGEGCFG), lysine 501, 549 to 551 (EFA), and asparagine 555 contribute to the ATP site. 2 positions are modified to phosphotyrosine; by autocatalysis: tyrosine 570 and tyrosine 572. Residue aspartate 610 is the Proton acceptor of the active site. ATP is bound by residues arginine 614 and aspartate 628. Residues tyrosine 640, tyrosine 641, tyrosine 717, and tyrosine 753 each carry the phosphotyrosine; by autocatalysis modification. A disordered region spans residues 787-810 (AGADEPCLPKFPPHPNRGVAFKKR).

Belongs to the protein kinase superfamily. Tyr protein kinase family. Fibroblast growth factor receptor subfamily. As to quaternary structure, monomer. Homodimer after ligand binding. Interacts with cnpy1. Post-translationally, autophosphorylated. Binding of FGF family members together with heparan sulfate proteoglycan or heparin promotes receptor dimerization and autophosphorylation on tyrosine residues. Autophosphorylation occurs in trans between the two FGFR molecules present in the dimer and proceeds in a highly ordered manner. Phosphotyrosine residues provide docking sites for interacting proteins and so are crucial for FGFR1 function and its regulation. In terms of processing, ubiquitinated. FGFR1 is rapidly ubiquitinated after autophosphorylation, leading to internalization and degradation. N-glycosylated in the endoplasmic reticulum. The N-glycan chains undergo further maturation to an Endo H-resistant form in the Golgi apparatus. In terms of tissue distribution, initially expressed in adaxial mesoderm with transcripts distinctly localized to the anterior portion of each half-somite. Hereupon, also strongly expressed in the otic vesicles, branchial arches and the brain, especially at the midbrain-hindbrain boundary (MHB).

Its subcellular location is the cell membrane. It is found in the nucleus. The protein localises to the cytoplasm. It localises to the cytosol. The protein resides in the cytoplasmic vesicle. The enzyme catalyses L-tyrosyl-[protein] + ATP = O-phospho-L-tyrosyl-[protein] + ADP + H(+). Its activity is regulated as follows. Present in an inactive conformation in the absence of bound ligand. Ligand binding leads to dimerization and activation by sequential autophosphorylation on tyrosine residues. In terms of biological role, tyrosine-protein kinase that acts as a cell-surface receptor for fibroblast growth factors and plays an essential role in the regulation of embryonic development, cell proliferation, differentiation and migration. Required for normal mesoderm patterning and normal skeletogenesis. Phosphorylates PLCG1, FRS2, GAB1 and SHB. Ligand binding leads to the activation of several signaling cascades. Activation of PLCG1 leads to the production of the cellular signaling molecules diacylglycerol and inositol-1,4,5-trisphosphate. Phosphorylation of FRS2 triggers recruitment of GRB2, GAB1, PIK3R1 and SOS1, and mediates activation of RAS, MAPK1/ERK2, MAPK3/ERK1 and the MAP kinase signaling pathway, as well as of the AKT1 signaling pathway. Promotes phosphorylation of SHC1, STAT1 and PTPN11/SHP2. In the nucleus, enhances RPS6KA1 and CREB1 activity and contributes to the regulation of transcription. FGFR1 signaling is down-regulated by ubiquitination, internalization and degradation. The protein is Fibroblast growth factor receptor 1-A (fgfr1a) of Danio rerio (Zebrafish).